Here is a 239-residue protein sequence, read N- to C-terminus: MIELIPAIDIIDGKCVRLSQGDYGSKKVYNENPVEVAKEFEANGIRRLHVVDLDGAASHHVVNYRTLDLISSRTSLIIDFGGGLKSDEDLIIAFENGAQMVTGGSIAVRNPDLFCRWIDRYGSGKIILGADVKDRRIAVNGWKDESTCELFPFLKDYTQKGIEKVICTDISCDGMLAGPSLDLYKEILAEHPTLYLIASGGVSSIADIEALHEAGVPAVIFGKALYEGRITLKELQAFL.

Catalysis depends on aspartate 9, which acts as the Proton acceptor. Aspartate 131 serves as the catalytic Proton donor.

The protein belongs to the HisA/HisF family.

The protein resides in the cytoplasm. The catalysed reaction is 1-(5-phospho-beta-D-ribosyl)-5-[(5-phospho-beta-D-ribosylamino)methylideneamino]imidazole-4-carboxamide = 5-[(5-phospho-1-deoxy-D-ribulos-1-ylimino)methylamino]-1-(5-phospho-beta-D-ribosyl)imidazole-4-carboxamide. The protein operates within amino-acid biosynthesis; L-histidine biosynthesis; L-histidine from 5-phospho-alpha-D-ribose 1-diphosphate: step 4/9. This is 1-(5-phosphoribosyl)-5-[(5-phosphoribosylamino)methylideneamino] imidazole-4-carboxamide isomerase from Bacteroides fragilis (strain ATCC 25285 / DSM 2151 / CCUG 4856 / JCM 11019 / LMG 10263 / NCTC 9343 / Onslow / VPI 2553 / EN-2).